The sequence spans 197 residues: 3-isopropylmalate dehydratase small subunit (197 aa).

This sequence belongs to the LeuD family. LeuD type 1 subfamily. Heterodimer of LeuC and LeuD.

It catalyses the reaction (2R,3S)-3-isopropylmalate = (2S)-2-isopropylmalate. Its pathway is amino-acid biosynthesis; L-leucine biosynthesis; L-leucine from 3-methyl-2-oxobutanoate: step 2/4. Functionally, catalyzes the isomerization between 2-isopropylmalate and 3-isopropylmalate, via the formation of 2-isopropylmaleate. The chain is 3-isopropylmalate dehydratase small subunit from Mycolicibacterium vanbaalenii (strain DSM 7251 / JCM 13017 / BCRC 16820 / KCTC 9966 / NRRL B-24157 / PYR-1) (Mycobacterium vanbaalenii).